Reading from the N-terminus, the 372-residue chain is Ubiquitin carboxyl-terminal hydrolase 12 (372 aa).

The region spanning 39–371 (FGLVNFGNTC…SGYILFYQSR (333 aa)) is the USP domain. The active-site Nucleophile is Cys48. The tract at residues 150–169 (NGRLANGSLDSQNHNSNAPP) is disordered. The span at 157–166 (SLDSQNHNSN) shows a compositional bias: polar residues. The Zn(2+) site is built by Cys188, Cys191, Cys235, and Cys238. The active-site Proton acceptor is His319.

This sequence belongs to the peptidase C19 family. USP12/USP46 subfamily. Interacts with WDR48.

The enzyme catalyses Thiol-dependent hydrolysis of ester, thioester, amide, peptide and isopeptide bonds formed by the C-terminal Gly of ubiquitin (a 76-residue protein attached to proteins as an intracellular targeting signal).. In terms of biological role, deubiquitinating enzyme. Has almost no deubiquitinating activity by itself and requires the interaction with wdr48 to have a high activity. The sequence is that of Ubiquitin carboxyl-terminal hydrolase 12 (usp12) from Salmo salar (Atlantic salmon).